The primary structure comprises 152 residues: Ribosome maturation factor RimP (152 aa).

Belongs to the RimP family.

The protein resides in the cytoplasm. Its function is as follows. Required for maturation of 30S ribosomal subunits. This is Ribosome maturation factor RimP from Paraburkholderia phymatum (strain DSM 17167 / CIP 108236 / LMG 21445 / STM815) (Burkholderia phymatum).